A 1364-amino-acid polypeptide reads, in one-letter code: DNA-directed RNA polymerase subunit beta (1364 aa).

It belongs to the RNA polymerase beta chain family. As to quaternary structure, the RNAP catalytic core consists of 2 alpha, 1 beta, 1 beta' and 1 omega subunit. When a sigma factor is associated with the core the holoenzyme is formed, which can initiate transcription.

It catalyses the reaction RNA(n) + a ribonucleoside 5'-triphosphate = RNA(n+1) + diphosphate. Its function is as follows. DNA-dependent RNA polymerase catalyzes the transcription of DNA into RNA using the four ribonucleoside triphosphates as substrates. The protein is DNA-directed RNA polymerase subunit beta of Desulfatibacillum aliphaticivorans.